Reading from the N-terminus, the 916-residue chain is Internalin J (916 aa).

The first 25 residues, 1 to 25 (MKTSKIIIASLVSLTLVSNPILTFA), serve as a signal peptide directing secretion. 14 LRR repeats span residues 94-115 (TLTS…EKLT), 116-136 (GLTK…SQNT), 137-157 (NLTY…TPLT), 158-179 (KLTY…QNPL), 180-200 (LTYL…HNTQ), 201-221 (LTEL…TPQT), 222-243 (QLTT…QNKL), 244-263 (LNRL…NQNI), 264-284 (QLTF…TPLT), 285-306 (QLTY…TLSK), 316-325 (DLLEIDLTHN), 338-357 (KIKE…DCQA), 359-368 (GITELDLSQN), and 380-402 (ELTK…NAHI). MucBP domains lie at 506-568 (PIKG…SQSV), 576-638 (IVAA…SQTV), 646-708 (IVAA…AQTV), 717-779 (APEK…SQTV), and 787-849 (IVAA…AQTV). The disordered stretch occupies residues 862 to 888 (PLPDKKTTKPSNLKTTEVKKASDTLPK). The LPXTG sorting signal motif lies at 886-890 (LPKTG). Thr889 bears the Pentaglycyl murein peptidoglycan amidated threonine mark. A propeptide spans 890 to 916 (GDSTPWKSALLGVFLSSTALVIWKKKK) (removed by sortase).

The protein belongs to the internalin family.

It localises to the secreted. The protein resides in the cell wall. Its function is as follows. Involved in several steps of L.monocytogenes infection, probably improves adhesin to host cells. This is Internalin J (inlJ) from Listeria monocytogenes serotype 4b (strain F2365).